A 519-amino-acid polypeptide reads, in one-letter code: Aspartokinase (519 aa).

Ser326 carries the phosphoserine modification. At Thr328 the chain carries Phosphothreonine. Residues 436–518 (LVGKHMRNTT…MLVEKPWLYS (83 aa)) form the ACT domain.

Belongs to the aspartokinase family.

The catalysed reaction is L-aspartate + ATP = 4-phospho-L-aspartate + ADP. It functions in the pathway amino-acid biosynthesis; L-methionine biosynthesis via de novo pathway; L-homoserine from L-aspartate: step 1/3. It participates in amino-acid biosynthesis; L-threonine biosynthesis; L-threonine from L-aspartate: step 1/5. Its function is as follows. Phosphorylates aspartate, the first step in the biosynthesis of amino acids that derive from aspartate (the aspartate family of amino acids), including methioinine and threonine, the latter of which is a precursor to isoleucine. The chain is Aspartokinase from Schizosaccharomyces pombe (strain 972 / ATCC 24843) (Fission yeast).